The chain runs to 54 residues: UPF0391 membrane protein Daro_2080 (54 aa).

Helical transmembrane passes span alanine 5–alanine 25 and isoleucine 30–phenylalanine 50.

The protein belongs to the UPF0391 family.

Its subcellular location is the cell membrane. In Dechloromonas aromatica (strain RCB), this protein is UPF0391 membrane protein Daro_2080.